A 170-amino-acid polypeptide reads, in one-letter code: Peptide deformylase (170 aa).

The Fe cation site is built by C92 and H134. E135 is an active-site residue. H138 is a binding site for Fe cation.

It belongs to the polypeptide deformylase family. The cofactor is Fe(2+).

It catalyses the reaction N-terminal N-formyl-L-methionyl-[peptide] + H2O = N-terminal L-methionyl-[peptide] + formate. In terms of biological role, removes the formyl group from the N-terminal Met of newly synthesized proteins. Requires at least a dipeptide for an efficient rate of reaction. N-terminal L-methionine is a prerequisite for activity but the enzyme has broad specificity at other positions. The sequence is that of Peptide deformylase from Chromohalobacter salexigens (strain ATCC BAA-138 / DSM 3043 / CIP 106854 / NCIMB 13768 / 1H11).